A 125-amino-acid chain; its full sequence is Small ribosomal subunit protein uS13 (125 aa).

A disordered region spans residues 95-125 (GLPVNGQRTRTNARTRKGGKKTVANKKKVTK). A compositionally biased stretch (basic residues) spans 105–125 (TNARTRKGGKKTVANKKKVTK).

The protein belongs to the universal ribosomal protein uS13 family. In terms of assembly, part of the 30S ribosomal subunit. Forms a loose heterodimer with protein S19. Forms two bridges to the 50S subunit in the 70S ribosome.

In terms of biological role, located at the top of the head of the 30S subunit, it contacts several helices of the 16S rRNA. In the 70S ribosome it contacts the 23S rRNA (bridge B1a) and protein L5 of the 50S subunit (bridge B1b), connecting the 2 subunits; these bridges are implicated in subunit movement. Contacts the tRNAs in the A and P-sites. The chain is Small ribosomal subunit protein uS13 from Leptospira interrogans serogroup Icterohaemorrhagiae serovar copenhageni (strain Fiocruz L1-130).